The primary structure comprises 349 residues: UPF0284 protein MA_3887 (349 aa).

It belongs to the UPF0284 family.

The sequence is that of UPF0284 protein MA_3887 from Methanosarcina acetivorans (strain ATCC 35395 / DSM 2834 / JCM 12185 / C2A).